Consider the following 288-residue polypeptide: Inositol monophosphatase 2 (288 aa).

Residues E81, D101, I103, and D104 each coordinate Mg(2+). E81 lines the substrate pocket. Substrate contacts are provided by residues 103–106, 205–207, Q224, and D231; these read IDGT and GSS. D231 is a Mg(2+) binding site.

The protein belongs to the inositol monophosphatase superfamily. Homodimer. It depends on Mg(2+) as a cofactor.

It is found in the cytoplasm. It catalyses the reaction a myo-inositol phosphate + H2O = myo-inositol + phosphate. The enzyme catalyses 1D-myo-inositol 1-phosphate + H2O = myo-inositol + phosphate. It carries out the reaction 1D-myo-inositol 2-phosphate + H2O = myo-inositol + phosphate. The catalysed reaction is 1D-myo-inositol 3-phosphate + H2O = myo-inositol + phosphate. It catalyses the reaction 1D-myo-inositol 4-phosphate + H2O = myo-inositol + phosphate. The enzyme catalyses 1D-myo-inositol 5-phosphate + H2O = myo-inositol + phosphate. It carries out the reaction 1D-myo-inositol 6-phosphate + H2O = myo-inositol + phosphate. The catalysed reaction is alpha-D-glucose 1-phosphate + H2O = D-glucose + phosphate. It catalyses the reaction glycerol 2-phosphate + H2O = glycerol + phosphate. The enzyme catalyses adenosine 2'-phosphate + H2O = adenosine + phosphate. The protein operates within polyol metabolism; myo-inositol biosynthesis; myo-inositol from D-glucose 6-phosphate: step 2/2. Its activity is regulated as follows. Inhibited by high Li(+) and restricted Mg(2+) concentrations. In terms of biological role, phosphatase that can use myo-inositol monophosphates, myo-inositol 1,4-diphosphate, scyllo-inositol-1,4-diphosphate, glucose-1-phosphate, beta-glycerophosphate and 2'-AMP as substrates in vitro. It is likely that IMPA2 has an as yet unidentified in vivo substrate(s). Has been implicated as the pharmacological target for lithium (Li(+)) action in brain. The chain is Inositol monophosphatase 2 from Homo sapiens (Human).